Reading from the N-terminus, the 343-residue chain is Cytoplasmic tRNA 2-thiolation protein 1 (343 aa).

The protein belongs to the TtcA family. CTU1/NCS6/ATPBD3 subfamily.

The protein resides in the cytoplasm. It functions in the pathway tRNA modification; 5-methoxycarbonylmethyl-2-thiouridine-tRNA biosynthesis. Plays a central role in 2-thiolation of mcm(5)S(2)U at tRNA wobble positions of tRNA(Lys), tRNA(Glu) and tRNA(Gln). Directly binds tRNAs and probably acts by catalyzing adenylation of tRNAs, an intermediate required for 2-thiolation. It is unclear whether it acts as a sulfurtransferase that transfers sulfur from thiocarboxylated URM1 onto the uridine of tRNAs at wobble position. This Drosophila yakuba (Fruit fly) protein is Cytoplasmic tRNA 2-thiolation protein 1.